The sequence spans 740 residues: Vertnin (740 aa).

Disordered stretches follow at residues 485 to 506 (EAGE…RGLI), 560 to 616 (PGMQ…DQNV), and 653 to 673 (TQSQ…APGG). The segment covering 578 to 604 (QKPEGRQKPEEQQKPEGRQKPEGRQKP) has biased composition (basic and acidic residues). Residues 653–667 (TQSQPHSGSLPSQTL) are compositionally biased toward polar residues.

Belongs to the vertnin family.

The protein resides in the nucleus. In terms of biological role, acts as a transcription factor that regulates development of thoracic vertebrae. This chain is Vertnin (Vrtn), found in Mus musculus (Mouse).